Here is a 357-residue protein sequence, read N- to C-terminus: Isopenicillin-N N-acyltransferase (357 aa).

Positions 121 and 310 each coordinate 6-aminopenicillanate.

Belongs to the peptidase C45 family. As to quaternary structure, the active form of the enzyme results from processing of the 40-kDa monomeric precursor to a heterodimer containing subunits of 11 and 29 kDa. Post-translationally, the pre-AAT protein is synthesized as 40 kDa precursor which is then self-processed into an 11 kDa (protein A) and a 29 kDa (protein B). The B protein carries AAT activity.

Its subcellular location is the peroxisome matrix. The enzyme catalyses isopenicillin N + phenylacetyl-CoA + H2O = penicillin G + L-2-aminoadipate + CoA + H(+). It functions in the pathway antibiotic biosynthesis; penicillin G biosynthesis; penicillin G from L-alpha-aminoadipate and L-cysteine and L-valine: step 3/3. Its function is as follows. Isopenicillin-N N-acyltransferase; part of the gene cluster that mediates the biosynthesis of penicillin, the world's most important antibiotic. AatA catalyzes the exchange of the alpha-aminoadipyl side chain of isopenicillin N for phenylacetic acid to yield penicillin. This step occurs in the peroxisomal matrix and the penM and paaT transporters are involved in the isopenicillin N and phenylacetic acid import into the peroxisome, respectively. The penicillin biosynthesis occurs via 3 enzymatic steps, the first corresponding to the production of the tripeptide N-[(5S)-5-amino-5-carboxypentanoyl]-L-cysteinyl-D-valine (LLD-ACV or ACV) by the NRPS acvA. The tripeptide ACV is then cyclized to isopenicillin N (IPN) by the isopenicillin N synthase ipnA that forms the beta-lactam nucleus. Finally, the alpha-aminoadipyl side chain is exchanged for phenylacetic acid by the isopenicillin N acyltransferase aatA to yield penicillin in the peroxisomal matrix. This is Isopenicillin-N N-acyltransferase from Penicillium chrysogenum (Penicillium notatum).